We begin with the raw amino-acid sequence, 468 residues long: Beta-amylase (468 aa).

An N-terminal signal peptide occupies residues 1–36; it reads MTLYRSLWKKGCMLLLSLVLSLTAFIGSPSNTASAA. A substrate-binding site is contributed by Asp-76. Residues Glu-83 and Asp-87 each contribute to the Ca(2+) site. Substrate-binding residues include His-116 and Asp-124. A disulfide bridge links Cys-118 with Cys-126. Ca(2+) is bound at residue Glu-170. Residue Glu-198 is the Proton donor of the active site. Positions 314, 319, and 357 each coordinate substrate. Glu-394 serves as the catalytic Proton acceptor. Residues 395–396 and Arg-423 contribute to the substrate site; that span reads NA.

The protein belongs to the glycosyl hydrolase 14 family. Ca(2+) is required as a cofactor.

The catalysed reaction is Hydrolysis of (1-&gt;4)-alpha-D-glucosidic linkages in polysaccharides so as to remove successive maltose units from the non-reducing ends of the chains.. This Cytobacillus firmus (Bacillus firmus) protein is Beta-amylase.